Here is a 132-residue protein sequence, read N- to C-terminus: S-adenosylmethionine decarboxylase proenzyme (132 aa).

Serine 65 serves as the catalytic Schiff-base intermediate with substrate; via pyruvic acid. Pyruvic acid (Ser); by autocatalysis is present on serine 65. Catalysis depends on histidine 70, which acts as the Proton acceptor; for processing activity. Cysteine 85 acts as the Proton donor; for catalytic activity in catalysis.

It belongs to the prokaryotic AdoMetDC family. Type 1 subfamily. In terms of assembly, heterotetramer of two alpha and two beta chains arranged as a dimer of alpha/beta heterodimers. Pyruvate is required as a cofactor. In terms of processing, is synthesized initially as an inactive proenzyme. Formation of the active enzyme involves a self-maturation process in which the active site pyruvoyl group is generated from an internal serine residue via an autocatalytic post-translational modification. Two non-identical subunits are generated from the proenzyme in this reaction, and the pyruvate is formed at the N-terminus of the alpha chain, which is derived from the carboxyl end of the proenzyme. The post-translation cleavage follows an unusual pathway, termed non-hydrolytic serinolysis, in which the side chain hydroxyl group of the serine supplies its oxygen atom to form the C-terminus of the beta chain, while the remainder of the serine residue undergoes an oxidative deamination to produce ammonia and the pyruvoyl group blocking the N-terminus of the alpha chain.

The catalysed reaction is S-adenosyl-L-methionine + H(+) = S-adenosyl 3-(methylsulfanyl)propylamine + CO2. It participates in amine and polyamine biosynthesis; S-adenosylmethioninamine biosynthesis; S-adenosylmethioninamine from S-adenosyl-L-methionine: step 1/1. Its function is as follows. Catalyzes the decarboxylation of S-adenosylmethionine to S-adenosylmethioninamine (dcAdoMet), the propylamine donor required for the synthesis of the polyamines spermine and spermidine from the diamine putrescine. The chain is S-adenosylmethionine decarboxylase proenzyme from Symbiobacterium thermophilum (strain DSM 24528 / JCM 14929 / IAM 14863 / T).